An 859-amino-acid chain; its full sequence is Leucine--tRNA ligase (859 aa).

Residues 42–52 (PYPSGRLHMGH) carry the 'HIGH' region motif. The 'KMSKS' region signature appears at 618 to 622 (KMSKS). K621 is an ATP binding site.

The protein belongs to the class-I aminoacyl-tRNA synthetase family.

The protein localises to the cytoplasm. It catalyses the reaction tRNA(Leu) + L-leucine + ATP = L-leucyl-tRNA(Leu) + AMP + diphosphate. The chain is Leucine--tRNA ligase from Shewanella sp. (strain MR-4).